A 156-amino-acid chain; its full sequence is SPbeta prophage-derived uncharacterized protein YorH (156 aa).

This chain is SPbeta prophage-derived uncharacterized protein YorH (yorH), found in Bacillus subtilis (strain 168).